The chain runs to 233 residues: Protein-L-isoaspartate O-methyltransferase (233 aa).

Ser83 is a catalytic residue.

It belongs to the methyltransferase superfamily. L-isoaspartyl/D-aspartyl protein methyltransferase family.

The protein resides in the cytoplasm. It catalyses the reaction [protein]-L-isoaspartate + S-adenosyl-L-methionine = [protein]-L-isoaspartate alpha-methyl ester + S-adenosyl-L-homocysteine. Catalyzes the methyl esterification of L-isoaspartyl residues in peptides and proteins that result from spontaneous decomposition of normal L-aspartyl and L-asparaginyl residues. It plays a role in the repair and/or degradation of damaged proteins. The sequence is that of Protein-L-isoaspartate O-methyltransferase from Opitutus terrae (strain DSM 11246 / JCM 15787 / PB90-1).